Reading from the N-terminus, the 350-residue chain is Phosphotriesterase-related protein (350 aa).

A divalent metal cation contacts are provided by His22, His24, Glu169, His201, His230, and Asp298.

This sequence belongs to the metallo-dependent hydrolases superfamily. Phosphotriesterase family. A divalent metal cation serves as cofactor.

The polypeptide is Phosphotriesterase-related protein (Drosophila grimshawi (Hawaiian fruit fly)).